The sequence spans 85 residues: MGCCGCGGCGGCGGGCGGGCGSCTTCRCYRVGCCSSCCPCCRGCCGGCCSTPVICCCRRTCCSCGCGCGKGCCQQKGCCQKQCCC.

Residues 4–69 (CGCGGCGGCG…TCCSCGCGCG (66 aa)) form a 10 X 2 AA repeats of CG region.

It belongs to the KRTAP type 28 family.

In the hair cortex, hair keratin intermediate filaments are embedded in an interfilamentous matrix, consisting of hair keratin-associated proteins (KRTAP), which are essential for the formation of a rigid and resistant hair shaft through their extensive disulfide bond cross-linking with abundant cysteine residues of hair keratins. The matrix proteins include the high-sulfur and high-glycine-tyrosine keratins. The protein is Small cysteine and glycine repeat-containing protein 5 of Homo sapiens (Human).